The primary structure comprises 101 residues: Protein Tat (101 aa).

The interval 1–24 is interaction with human CREBBP; that stretch reads MEPVDPNLEPWKHPGSQPRTACNN. A transactivation region spans residues 1-48; the sequence is MEPVDPNLEPWKHPGSQPRTACNNCYCKKCCFHCYACFTRKGLGISYG. Zn(2+)-binding residues include Cys22, Cys25, and Cys27. Positions 22-37 are cysteine-rich; that stretch reads CNNCYCKKCCFHCYAC. An N6-acetyllysine; by host PCAF modification is found at Lys28. Residues Cys30, His33, Cys34, and Cys37 each coordinate Zn(2+). Residues 38 to 48 are core; that stretch reads FTRKGLGISYG. Over residues 48–57 the composition is skewed to basic residues; the sequence is GRKKRRQRRR. The segment at 48-101 is disordered; the sequence is GRKKRRQRRRAPQDSQTHQASLSKQPASQSRGDPTGPTESKKKVERETETDPFD. The short motif at 49 to 57 is the Nuclear localization signal, RNA-binding (TAR), and protein transduction element; it reads RKKRRQRRR. Residues 49–86 are interaction with the host capping enzyme RNGTT; it reads RKKRRQRRRAPQDSQTHQASLSKQPASQSRGDPTGPTE. Residues Lys50 and Lys51 each carry the N6-acetyllysine; by host EP300 and GCN5L2 modification. Arg52 and Arg53 each carry asymmetric dimethylarginine; by host PRMT6. Positions 60–79 are enriched in polar residues; sequence QDSQTHQASLSKQPASQSRG. Residue Lys71 forms a Glycyl lysine isopeptide (Lys-Gly) (interchain with G-Cter in ubiquitin) linkage. Residues 78–80 carry the Cell attachment site motif; sequence RGD. The segment covering 86–101 has biased composition (basic and acidic residues); that stretch reads ESKKKVERETETDPFD.

The protein belongs to the lentiviruses Tat family. Interacts with host CCNT1. Associates with the P-TEFb complex composed at least of Tat, P-TEFb (CDK9 and CCNT1), TAR RNA, RNA Pol II. Recruits the HATs CREBBP, TAF1/TFIID, EP300, PCAF and GCN5L2. Interacts with host KAT5/Tip60; this interaction targets the latter to degradation. Interacts with the host deacetylase SIRT1. Interacts with host capping enzyme RNGTT; this interaction stimulates RNGTT. Binds to host KDR, and to the host integrins ITGAV/ITGB3 and ITGA5/ITGB1. Interacts with host KPNB1/importin beta-1 without previous binding to KPNA1/importin alpha-1. Interacts with EIF2AK2. Interacts with host nucleosome assembly protein NAP1L1; this interaction may be required for the transport of Tat within the nucleus, since the two proteins interact at the nuclear rim. Interacts with host C1QBP/SF2P32; this interaction involves lysine-acetylated Tat. Interacts with the host chemokine receptors CCR2, CCR3 and CXCR4. Interacts with host DPP4/CD26; this interaction may trigger an anti-proliferative effect. Interacts with host LDLR. Interacts with the host extracellular matrix metalloproteinase MMP1. Interacts with host PRMT6; this interaction mediates Tat's methylation. Interacts with, and is ubiquitinated by MDM2/Hdm2. Interacts with host PSMC3 and HTATIP2. Interacts with STAB1; this interaction may overcome SATB1-mediated repression of IL2 and IL2RA (interleukin) in T cells by binding to the same domain than HDAC1. Interacts (when acetylated) with human CDK13, thereby increasing HIV-1 mRNA splicing and promoting the production of the doubly spliced HIV-1 protein Nef. Interacts with host TBP; this interaction modulates the activity of transcriptional pre-initiation complex. Interacts with host RELA. Interacts with host PLSCR1; this interaction negatively regulates Tat transactivation activity by altering its subcellular distribution. Asymmetrical arginine methylation by host PRMT6 seems to diminish the transactivation capacity of Tat and affects the interaction with host CCNT1. Post-translationally, acetylation by EP300, CREBBP, GCN5L2/GCN5 and PCAF regulates the transactivation activity of Tat. EP300-mediated acetylation of Lys-50 promotes dissociation of Tat from the TAR RNA through the competitive binding to PCAF's bromodomain. In addition, the non-acetylated Tat's N-terminus can also interact with PCAF. PCAF-mediated acetylation of Lys-28 enhances Tat's binding to CCNT1. Lys-50 is deacetylated by SIRT1. In terms of processing, polyubiquitination by host MDM2 does not target Tat to degradation, but activates its transactivation function and fosters interaction with CCNT1 and TAR RNA. Phosphorylated by EIF2AK2 on serine and threonine residues adjacent to the basic region important for TAR RNA binding and function. Phosphorylation of Tat by EIF2AK2 is dependent on the prior activation of EIF2AK2 by dsRNA.

The protein resides in the host nucleus. The protein localises to the host nucleolus. Its subcellular location is the host cytoplasm. It is found in the secreted. In terms of biological role, transcriptional activator that increases RNA Pol II processivity, thereby increasing the level of full-length viral transcripts. Recognizes a hairpin structure at the 5'-LTR of the nascent viral mRNAs referred to as the transactivation responsive RNA element (TAR) and recruits the cyclin T1-CDK9 complex (P-TEFb complex) that will in turn hyperphosphorylate the RNA polymerase II to allow efficient elongation. The CDK9 component of P-TEFb and other Tat-activated kinases hyperphosphorylate the C-terminus of RNA Pol II that becomes stabilized and much more processive. Other factors such as HTATSF1/Tat-SF1, SUPT5H/SPT5, and HTATIP2 are also important for Tat's function. Besides its effect on RNA Pol II processivity, Tat induces chromatin remodeling of proviral genes by recruiting the histone acetyltransferases (HATs) CREBBP, EP300 and PCAF to the chromatin. This also contributes to the increase in proviral transcription rate, especially when the provirus integrates in transcriptionally silent region of the host genome. To ensure maximal activation of the LTR, Tat mediates nuclear translocation of NF-kappa-B by interacting with host RELA. Through its interaction with host TBP, Tat may also modulate transcription initiation. Tat can reactivate a latently infected cell by penetrating in it and transactivating its LTR promoter. In the cytoplasm, Tat is thought to act as a translational activator of HIV-1 mRNAs. Its function is as follows. Extracellular circulating Tat can be endocytosed by surrounding uninfected cells via the binding to several surface receptors such as CD26, CXCR4, heparan sulfate proteoglycans (HSPG) or LDLR. Neurons are rarely infected, but they internalize Tat via their LDLR. Through its interaction with nuclear HATs, Tat is potentially able to control the acetylation-dependent cellular gene expression. Modulates the expression of many cellular genes involved in cell survival, proliferation or in coding for cytokines or cytokine receptors. Tat plays a role in T-cell and neurons apoptosis. Tat induced neurotoxicity and apoptosis probably contribute to neuroAIDS. Circulating Tat also acts as a chemokine-like and/or growth factor-like molecule that binds to specific receptors on the surface of the cells, affecting many cellular pathways. In the vascular system, Tat binds to ITGAV/ITGB3 and ITGA5/ITGB1 integrins dimers at the surface of endothelial cells and competes with bFGF for heparin-binding sites, leading to an excess of soluble bFGF. The sequence is that of Protein Tat from Homo sapiens (Human).